We begin with the raw amino-acid sequence, 318 residues long: Olfactory receptor 2A2 (318 aa).

At 1–24 (MEGNQTWITDITLLGFQVGPALAI) the chain is on the extracellular side. N4 carries an N-linked (GlcNAc...) asparagine glycan. Residues 25 to 48 (LLCGLFSVFYTLTLLGNGVIFGII) traverse the membrane as a helical segment. Residues 49-56 (CLDSKLHT) lie on the Cytoplasmic side of the membrane. The helical transmembrane segment at 57–78 (PMYFFLSHLAIIDMSYASNNVP) threads the bilayer. Over 79–99 (KMLANLMNQKRTISFVPCIMQ) the chain is Extracellular. Residues 100-119 (TFLYLAFAVTECLILVVMSY) form a helical membrane-spanning segment. At 120-138 (DRYVAICHPFQYTVIMSWR) the chain is on the cytoplasmic side. Residues 139–157 (VCTILVLTSWSCGFALSLV) traverse the membrane as a helical segment. Residues 158–194 (HEILLLRLPFCGPRDVNHLFCEILSVLKLACADTWVN) are Extracellular-facing. The chain crosses the membrane as a helical span at residues 195–218 (QVVIFATCVFVLVGPLSLILVSYM). The Cytoplasmic portion of the chain corresponds to 219–235 (HILGAILKIQTKEGRIK). A helical membrane pass occupies residues 236–258 (AFSTCSSHLCVVGLFFGIAMVVY). Residues 259-271 (MVPDSNQREEQEK) lie on the Extracellular side of the membrane. Residues 272–291 (MLSLFHSVFNPMLNPLIYSL) form a helical membrane-spanning segment. The Cytoplasmic portion of the chain corresponds to 292-310 (RNAQLKGALHRALQRKRSM).

It belongs to the G-protein coupled receptor 1 family.

It is found in the cell membrane. Odorant receptor. The chain is Olfactory receptor 2A2 (OR2A2) from Homo sapiens (Human).